Here is a 185-residue protein sequence, read N- to C-terminus: Monothiol glutaredoxin-S4, mitochondrial (185 aa).

The N-terminal 36 residues, 1 to 36 (MARLMSSALIRGLVRSSCSPTVAAVAQPTIHQFRNY), are a transit peptide targeting the mitochondrion. The disordered stretch occupies residues 37-74 (SSGLGGDSTATGDSSSTRVAADPDTHQDFQPTTKSSNM). Positions 43-53 (DSTATGDSSST) are enriched in low complexity. Residues 64-74 (DFQPTTKSSNM) show a composition bias toward polar residues. A Glutaredoxin domain is found at 77–179 (DDIVSQDIKE…DVLGDIAQKR (103 aa)). Lys-94 contacts glutathione. Residue Cys-102 coordinates [2Fe-2S] cluster. Glutathione-binding positions include Lys-131, Phe-143, and 156-157 (SD).

It belongs to the glutaredoxin family. CGFS subfamily.

It is found in the mitochondrion. Functionally, may only reduce GSH-thiol disulfides, but not protein disulfides. In Oryza sativa subsp. japonica (Rice), this protein is Monothiol glutaredoxin-S4, mitochondrial (GRXS4).